Here is a 129-residue protein sequence, read N- to C-terminus: uncharacterized protein (129 aa).

The N-terminal stretch at 1-24 (MAFGWHSMHGSIIWFLQIAQLSTA) is a signal peptide. 2 consecutive transmembrane segments (helical) span residues 38–58 (ISNLFFLVSTGALWFELCAIF) and 95–115 (IAHIEAHTSIVGFMISLFTPL).

The protein resides in the membrane. This is an uncharacterized protein from Saccharomyces cerevisiae (strain ATCC 204508 / S288c) (Baker's yeast).